The chain runs to 192 residues: Fe/S biogenesis protein NfuA (192 aa).

Residues Cys149 and Cys152 each contribute to the [4Fe-4S] cluster site.

This sequence belongs to the NfuA family. In terms of assembly, homodimer. The cofactor is [4Fe-4S] cluster.

In terms of biological role, involved in iron-sulfur cluster biogenesis. Binds a 4Fe-4S cluster, can transfer this cluster to apoproteins, and thereby intervenes in the maturation of Fe/S proteins. Could also act as a scaffold/chaperone for damaged Fe/S proteins. This is Fe/S biogenesis protein NfuA from Shewanella putrefaciens (strain CN-32 / ATCC BAA-453).